A 550-amino-acid polypeptide reads, in one-letter code: Epidermal growth factor-like protein 6 (550 aa).

An N-terminal signal peptide occupies residues 1-18 (MQPPWGLALPLLLPWVTG). One can recognise an EGF-like 1 domain in the interval 55 to 90 (NKGVCEAMCEPRCKFGECVGPNKCRCFPGYTGKTCT). 6 cysteine pairs are disulfide-bonded: Cys59–Cys72, Cys63–Cys78, Cys80–Cys89, Cys96–Cys107, Cys103–Cys116, and Cys118–Cys130. The EGF-like 2; calcium-binding domain maps to 92–131 (DVNECGVKPRPCQHRCVNTHGSYKCFCLSGHMLLPDATCS). An EGF-like 3 domain is found at 135–171 (TCARLNCQYGCEDTEEGPRCVCPSSGLRLGPNGRVCL). Positions 172–210 (DIDECASSKAVCPSNRRCVNTFGSYYCKCHIGFELKYIG) constitute an EGF-like 4; calcium-binding domain. Disulfide bonds link Cys176/Cys189, Cys183/Cys198, Cys221/Cys234, Cys228/Cys243, and Cys245/Cys256. In terms of domain architecture, EGF-like 5; calcium-binding spans 217–257 (DINECALNTHPCSPHANCLNTRGSFKCKCKQGYRGNGLQCS). The interval 295–354 (KMVTPRPASTRVPKVNLPYSSEEGVSRGRNYDGEQKKKEEGKRERLEEEKGEKTLRNEVE) is disordered. Residues 318–354 (GVSRGRNYDGEQKKKEEGKRERLEEEKGEKTLRNEVE) are compositionally biased toward basic and acidic residues. Positions 327 to 357 (GEQKKKEEGKRERLEEEKGEKTLRNEVEQER) form a coiled coil. A glycan (N-linked (GlcNAc...) asparagine) is linked at Asn394. Residues 397–543 (VDCSFDLGVC…VLLVSGLCPD (147 aa)) enclose the MAM domain.

Belongs to the nephronectin family. As to expression, expressed at basement membrane of pelage follicles (at protein level).

It is found in the secreted. Its subcellular location is the extracellular space. The protein localises to the extracellular matrix. It localises to the basement membrane. Functionally, may bind integrin alpha-8/beta-1 and play a role in hair follicle morphogenesis. Promotes matrix assembly. The polypeptide is Epidermal growth factor-like protein 6 (Egfl6) (Mus musculus (Mouse)).